We begin with the raw amino-acid sequence, 153 residues long: Antibacterial peptide PMAP-23 (153 aa).

Residues 1 to 29 (METQRASLCLGRWSLWLLLLGLVVPSASA) form the signal peptide. At Gln-30 the chain carries Pyrrolidone carboxylic acid. Residues 30 to 130 (QALSYREAVL…DITCNQLQSV (101 aa)) constitute a propeptide that is removed on maturation. Residues 61 to 80 (DQPPKADEDPGTPKPVSFTV) form a disordered region. 2 cysteine pairs are disulfide-bonded: Cys-85–Cys-96 and Cys-107–Cys-124.

This sequence belongs to the cathelicidin family.

The protein localises to the secreted. Its function is as follows. Exerts antimicrobial activity against both Gram-positive and negative bacteria at concentrations of 2-16 micro molar. Its activity appears to be mediated by its ability to damage bacterial membranes. In Sus scrofa (Pig), this protein is Antibacterial peptide PMAP-23 (PMAP23).